The sequence spans 165 residues: Ubiquitin-like protein 4B (165 aa).

One can recognise a Ubiquitin-like domain in the interval 1 to 76 (MFLTVKLLLG…ISVVVRPLEK (76 aa)). The tract at residues 139-165 (EPLAQPTGEREPEVLSPNKEEEKEAVQ) is disordered. The span at 146–165 (GEREPEVLSPNKEEEKEAVQ) shows a compositional bias: basic and acidic residues.

The protein resides in the cytoplasm. The chain is Ubiquitin-like protein 4B (UBL4B) from Bos taurus (Bovine).